Here is a 591-residue protein sequence, read N- to C-terminus: MKKISLPKIGIRPVIDGRRMGVRESLEAQTMNMAKATAALISEKLRHACGARVECVIADTCIAGMAESAACEEKFSSQNVGVTITVTPCWCYGSETIDMDPLRPKAIWGFNGTERPGAVYLAAALAAHSQKGIPAFSIYGHDVQDADDTSIPADVEEKLLRFARAGLAVASMKGKSYLSLGGVSMGIAGSIVDHNFFESWLGMKVQAVDMTELRRRIDQKIYDETELEMALAWADKHFRYGEDQNAEQYKRNETQSRAVLKESLLMAMCIRDMMQGNPKLAEKGLVEESLGYNAIAAGFQGQRHWTDQYPNGDTAEALLNSSFDWNGVREPFVVATENDSLNGVAMLMGHQLTGTAQVFADVRTYWSPDAVERVTGQPLTGRAEHGIIHLINSGSAALDGSCQQRDAQGNPTMKPHWEIEQNEADACLAATEWCPAIHEYFRGGGFSSRFLTEGGVPFTMTRVNIIKGLGPVLQIAEGWSVALPKAMHDQLDARTNSTWPTTWFAPRLTGKGPFSDVYSVMANWGANHGVLTIGHVGADFITLAAMLRIPVCMHNVEAAKIYRPSAWAAHGMDIEGQDYRACQNYGPLYKR.

Residues Glu337 and Asp361 each act as proton acceptor in the active site. Mn(2+) is bound by residues Glu337, Asp361, and His528.

This sequence belongs to the L-fucose isomerase family. In terms of assembly, homohexamer. The cofactor is Mn(2+).

The protein localises to the cytoplasm. It catalyses the reaction L-fucose = L-fuculose. Its pathway is carbohydrate degradation; L-fucose degradation; L-lactaldehyde and glycerone phosphate from L-fucose: step 1/3. Converts the aldose L-fucose into the corresponding ketose L-fuculose. This Klebsiella pneumoniae (strain 342) protein is L-fucose isomerase.